The following is a 71-amino-acid chain: UPF0346 protein SPG_0874 (71 aa).

Belongs to the UPF0346 family.

The protein is UPF0346 protein SPG_0874 of Streptococcus pneumoniae serotype 19F (strain G54).